The following is a 660-amino-acid chain: UvrABC system protein B (660 aa).

A Helicase ATP-binding domain is found at 26–196; the sequence is DGIDEKKEHQ…ELNKGQFDVK (171 aa). 39-46 serves as a coordination point for ATP; that stretch reads GVTGSGKT. Positions 92-115 match the Beta-hairpin motif; sequence YFDFYKPEAYIPKSDLYIEKTSKN. The region spanning 431-593 is the Helicase C-terminal domain; sequence QIEDIYDHLK…IIPKTIVKPI (163 aa). Residues 622–657 enclose the UVR domain; the sequence is KKFIDQMVRKMTQLAKANKFEEAIEIRDYLIEIGIE.

Belongs to the UvrB family. In terms of assembly, forms a heterotetramer with UvrA during the search for lesions. Interacts with UvrC in an incision complex.

Its subcellular location is the cytoplasm. In terms of biological role, the UvrABC repair system catalyzes the recognition and processing of DNA lesions. A damage recognition complex composed of 2 UvrA and 2 UvrB subunits scans DNA for abnormalities. Upon binding of the UvrA(2)B(2) complex to a putative damaged site, the DNA wraps around one UvrB monomer. DNA wrap is dependent on ATP binding by UvrB and probably causes local melting of the DNA helix, facilitating insertion of UvrB beta-hairpin between the DNA strands. Then UvrB probes one DNA strand for the presence of a lesion. If a lesion is found the UvrA subunits dissociate and the UvrB-DNA preincision complex is formed. This complex is subsequently bound by UvrC and the second UvrB is released. If no lesion is found, the DNA wraps around the other UvrB subunit that will check the other stand for damage. The sequence is that of UvrABC system protein B from Metamycoplasma arthritidis (strain 158L3-1) (Mycoplasma arthritidis).